We begin with the raw amino-acid sequence, 146 residues long: SecB-like chaperone SmegB (146 aa).

It belongs to the SecB-like family.

Functionally, chaperone component of an orphan antitoxin chaperone (AC) system; there is no toxin gene in close genomic proximity. When expressed in E.coli complements the cold-sensitive phenotype of a secB deletion, suggesting it may have a generic chaperone function. Does not however complement the toxin-neutralizing effect of its M.tuberculosis paralog Rv1957 (AC P95257) in E.coli, probably because the antitoxin genes are not from the same family. This Mycolicibacterium smegmatis (strain ATCC 700084 / mc(2)155) (Mycobacterium smegmatis) protein is SecB-like chaperone SmegB.